The following is an 878-amino-acid chain: Aconitate hydratase A (878 aa).

[4Fe-4S] cluster is bound by residues cysteine 426, cysteine 492, and cysteine 495.

Belongs to the aconitase/IPM isomerase family. Monomer. [4Fe-4S] cluster is required as a cofactor.

It catalyses the reaction citrate = D-threo-isocitrate. The enzyme catalyses (2S,3R)-3-hydroxybutane-1,2,3-tricarboxylate = 2-methyl-cis-aconitate + H2O. It functions in the pathway carbohydrate metabolism; tricarboxylic acid cycle; isocitrate from oxaloacetate: step 2/2. The protein operates within organic acid metabolism; propanoate degradation. Involved in the catabolism of short chain fatty acids (SCFA) via the tricarboxylic acid (TCA)(acetyl degradation route) and probably the 2-methylcitrate cycle I (propionate degradation route). Catalyzes the reversible isomerization of citrate to isocitrate via cis-aconitate. Could catalyze the hydration of 2-methyl-cis-aconitate to yield (2R,3S)-2-methylisocitrate. The apo form of AcnA functions as a RNA-binding regulatory protein. The protein is Aconitate hydratase A (acnA) of Rickettsia typhi (strain ATCC VR-144 / Wilmington).